Consider the following 241-residue polypeptide: Small ribosomal subunit protein uS2 (241 aa).

This sequence belongs to the universal ribosomal protein uS2 family.

In Glaesserella parasuis serovar 5 (strain SH0165) (Haemophilus parasuis), this protein is Small ribosomal subunit protein uS2.